We begin with the raw amino-acid sequence, 398 residues long: Succinate--CoA ligase [ADP-forming] subunit beta (398 aa).

One can recognise an ATP-grasp domain in the interval 9-254; the sequence is KAVLREFGVP…ETEEDAKEIE (246 aa). ATP contacts are provided by residues K46, 53 to 55, E109, S112, and E117; that span reads GRG. N209 and D223 together coordinate Mg(2+). Substrate-binding positions include N274 and 331–333; that span reads GIM.

Belongs to the succinate/malate CoA ligase beta subunit family. As to quaternary structure, heterotetramer of two alpha and two beta subunits. Requires Mg(2+) as cofactor.

The enzyme catalyses succinate + ATP + CoA = succinyl-CoA + ADP + phosphate. It catalyses the reaction GTP + succinate + CoA = succinyl-CoA + GDP + phosphate. It functions in the pathway carbohydrate metabolism; tricarboxylic acid cycle; succinate from succinyl-CoA (ligase route): step 1/1. Functionally, succinyl-CoA synthetase functions in the citric acid cycle (TCA), coupling the hydrolysis of succinyl-CoA to the synthesis of either ATP or GTP and thus represents the only step of substrate-level phosphorylation in the TCA. The beta subunit provides nucleotide specificity of the enzyme and binds the substrate succinate, while the binding sites for coenzyme A and phosphate are found in the alpha subunit. The protein is Succinate--CoA ligase [ADP-forming] subunit beta of Rhodopseudomonas palustris (strain ATCC BAA-98 / CGA009).